The chain runs to 620 residues: Chaperone protein DnaK (620 aa).

Phosphothreonine; by autocatalysis is present on Thr174. Positions 590–620 (AAGAGPDMSGAGPQGDTYAGDDVVDGDYREV) are disordered.

The protein belongs to the heat shock protein 70 family.

Acts as a chaperone. The protein is Chaperone protein DnaK of Lachnoclostridium phytofermentans (strain ATCC 700394 / DSM 18823 / ISDg) (Clostridium phytofermentans).